The primary structure comprises 95 residues: Aspartyl/glutamyl-tRNA(Asn/Gln) amidotransferase subunit C (95 aa).

Belongs to the GatC family. In terms of assembly, heterotrimer of A, B and C subunits.

It catalyses the reaction L-glutamyl-tRNA(Gln) + L-glutamine + ATP + H2O = L-glutaminyl-tRNA(Gln) + L-glutamate + ADP + phosphate + H(+). It carries out the reaction L-aspartyl-tRNA(Asn) + L-glutamine + ATP + H2O = L-asparaginyl-tRNA(Asn) + L-glutamate + ADP + phosphate + 2 H(+). Functionally, allows the formation of correctly charged Asn-tRNA(Asn) or Gln-tRNA(Gln) through the transamidation of misacylated Asp-tRNA(Asn) or Glu-tRNA(Gln) in organisms which lack either or both of asparaginyl-tRNA or glutaminyl-tRNA synthetases. The reaction takes place in the presence of glutamine and ATP through an activated phospho-Asp-tRNA(Asn) or phospho-Glu-tRNA(Gln). This Nitrobacter hamburgensis (strain DSM 10229 / NCIMB 13809 / X14) protein is Aspartyl/glutamyl-tRNA(Asn/Gln) amidotransferase subunit C.